Here is a 321-residue protein sequence, read N- to C-terminus: Aspartate carbamoyltransferase catalytic subunit (321 aa).

2 residues coordinate carbamoyl phosphate: Arg64 and Thr65. Lys92 is an L-aspartate binding site. The carbamoyl phosphate site is built by Arg114, His142, and Gln145. Arg175 and Arg229 together coordinate L-aspartate. Residues Gly270 and Pro271 each coordinate carbamoyl phosphate.

It belongs to the aspartate/ornithine carbamoyltransferase superfamily. ATCase family. Heterododecamer (2C3:3R2) of six catalytic PyrB chains organized as two trimers (C3), and six regulatory PyrI chains organized as three dimers (R2).

It catalyses the reaction carbamoyl phosphate + L-aspartate = N-carbamoyl-L-aspartate + phosphate + H(+). It functions in the pathway pyrimidine metabolism; UMP biosynthesis via de novo pathway; (S)-dihydroorotate from bicarbonate: step 2/3. In terms of biological role, catalyzes the condensation of carbamoyl phosphate and aspartate to form carbamoyl aspartate and inorganic phosphate, the committed step in the de novo pyrimidine nucleotide biosynthesis pathway. The polypeptide is Aspartate carbamoyltransferase catalytic subunit (Azorhizobium caulinodans (strain ATCC 43989 / DSM 5975 / JCM 20966 / LMG 6465 / NBRC 14845 / NCIMB 13405 / ORS 571)).